Here is a 237-residue protein sequence, read N- to C-terminus: MQQSKEERVHDVFEKISDKYDVMNSVISFQRHKAWRKETMRIMDVKPGSKALDVCCGTADWTIALAEAVGEQGKVVGLDFSENMLSVGKQKVEALQLKQVELLHGNAMELPFEDNTFDYVTIGFGLRNVPDYMHVLKEMTRVVKPGGKVICLETSQPTMIGFRQGYILYFKYIMPLFGKLFAKSYKEYSWLQESASTFPGMKELANMFEKAGLERVQVKPFTFGVAAMHLGMKPESK.

S-adenosyl-L-methionine is bound by residues threonine 58, aspartate 79, and 106–107 (NA).

Belongs to the class I-like SAM-binding methyltransferase superfamily. MenG/UbiE family.

The catalysed reaction is a 2-demethylmenaquinol + S-adenosyl-L-methionine = a menaquinol + S-adenosyl-L-homocysteine + H(+). It functions in the pathway quinol/quinone metabolism; menaquinone biosynthesis; menaquinol from 1,4-dihydroxy-2-naphthoate: step 2/2. Methyltransferase required for the conversion of demethylmenaquinol (DMKH2) to menaquinol (MKH2). This chain is Demethylmenaquinone methyltransferase, found in Bacillus cereus (strain ATCC 10987 / NRS 248).